The primary structure comprises 61 residues: uncharacterized protein (61 aa).

The disordered stretch occupies residues 23–61 (VPTKWQDYKKPGPNQKYTSDGKKRRRIRRSQKSILGVRS). Residues 44-53 (KKRRRIRRSQ) are compositionally biased toward basic residues.

This is an uncharacterized protein from Archaeoglobus fulgidus (strain ATCC 49558 / DSM 4304 / JCM 9628 / NBRC 100126 / VC-16).